We begin with the raw amino-acid sequence, 146 residues long: D-aminoacyl-tRNA deacylase (146 aa).

The Gly-cisPro motif, important for rejection of L-amino acids signature appears at 137-138 (GP).

Belongs to the DTD family. As to quaternary structure, homodimer.

It localises to the cytoplasm. The catalysed reaction is glycyl-tRNA(Ala) + H2O = tRNA(Ala) + glycine + H(+). The enzyme catalyses a D-aminoacyl-tRNA + H2O = a tRNA + a D-alpha-amino acid + H(+). Functionally, an aminoacyl-tRNA editing enzyme that deacylates mischarged D-aminoacyl-tRNAs. Also deacylates mischarged glycyl-tRNA(Ala), protecting cells against glycine mischarging by AlaRS. Acts via tRNA-based rather than protein-based catalysis; rejects L-amino acids rather than detecting D-amino acids in the active site. By recycling D-aminoacyl-tRNA to D-amino acids and free tRNA molecules, this enzyme counteracts the toxicity associated with the formation of D-aminoacyl-tRNA entities in vivo and helps enforce protein L-homochirality. The protein is D-aminoacyl-tRNA deacylase of Shouchella clausii (strain KSM-K16) (Alkalihalobacillus clausii).